Here is a 242-residue protein sequence, read N- to C-terminus: Haloacid dehalogenase-like hydrolase domain-containing protein 3 (242 aa).

This sequence belongs to the HAD-like hydrolase superfamily.

This Danio rerio (Zebrafish) protein is Haloacid dehalogenase-like hydrolase domain-containing protein 3 (hdhd3).